We begin with the raw amino-acid sequence, 283 residues long: Formamidopyrimidine-DNA glycosylase (283 aa).

Proline 2 functions as the Schiff-base intermediate with DNA in the catalytic mechanism. Catalysis depends on glutamate 3, which acts as the Proton donor. Lysine 58 functions as the Proton donor; for beta-elimination activity in the catalytic mechanism. Residues histidine 100, arginine 119, and lysine 162 each contribute to the DNA site. The FPG-type zinc-finger motif lies at 247-283; the sequence is RVYGREGQRCQTPDCAEKILRKVQSGRSSFYCPACQR. Residue arginine 273 is the Proton donor; for delta-elimination activity of the active site.

The protein belongs to the FPG family. As to quaternary structure, monomer. Zn(2+) serves as cofactor.

It catalyses the reaction Hydrolysis of DNA containing ring-opened 7-methylguanine residues, releasing 2,6-diamino-4-hydroxy-5-(N-methyl)formamidopyrimidine.. The enzyme catalyses 2'-deoxyribonucleotide-(2'-deoxyribose 5'-phosphate)-2'-deoxyribonucleotide-DNA = a 3'-end 2'-deoxyribonucleotide-(2,3-dehydro-2,3-deoxyribose 5'-phosphate)-DNA + a 5'-end 5'-phospho-2'-deoxyribonucleoside-DNA + H(+). Functionally, involved in base excision repair of DNA damaged by oxidation or by mutagenic agents. Acts as a DNA glycosylase that recognizes and removes damaged bases. Has a preference for oxidized purines, such as 7,8-dihydro-8-oxoguanine (8-oxoG). Has AP (apurinic/apyrimidinic) lyase activity and introduces nicks in the DNA strand. Cleaves the DNA backbone by beta-delta elimination to generate a single-strand break at the site of the removed base with both 3'- and 5'-phosphates. In Jannaschia sp. (strain CCS1), this protein is Formamidopyrimidine-DNA glycosylase.